Here is a 189-residue protein sequence, read N- to C-terminus: Adenylate kinase (189 aa).

G11–T16 serves as a coordination point for ATP. The interval S31–I60 is NMP. AMP is bound by residues T32, R37, Q58 to I60, G86 to R89, and Q93. The tract at residues K127–D137 is LID. R128 provides a ligand contact to ATP. R134 and R145 together coordinate AMP. G173 serves as a coordination point for ATP.

Belongs to the adenylate kinase family. In terms of assembly, monomer.

The protein localises to the cytoplasm. It catalyses the reaction AMP + ATP = 2 ADP. It participates in purine metabolism; AMP biosynthesis via salvage pathway; AMP from ADP: step 1/1. Catalyzes the reversible transfer of the terminal phosphate group between ATP and AMP. Plays an important role in cellular energy homeostasis and in adenine nucleotide metabolism. This Bacteroides thetaiotaomicron (strain ATCC 29148 / DSM 2079 / JCM 5827 / CCUG 10774 / NCTC 10582 / VPI-5482 / E50) protein is Adenylate kinase.